The sequence spans 273 residues: Multidrug-efflux transporter 2 regulator (273 aa).

Positions 8-77 (YFTTGEFSKL…LKEIKCLIKG (70 aa)) constitute an HTH merR-type domain. Positions 11–30 (TGEFSKLCRVKKQTLFHYDE) form a DNA-binding region, H-T-H motif.

Its function is as follows. Activates transcription of the blt gene in response to structurally dissimilar drugs. The polypeptide is Multidrug-efflux transporter 2 regulator (bltR) (Bacillus subtilis (strain 168)).